The sequence spans 188 residues: Probable manganese efflux pump MntP (188 aa).

The next 6 helical transmembrane spans lie at Tyr-3–Gly-23, Leu-41–Ala-61, Leu-66–Ile-86, Trp-106–Phe-128, Ala-143–Gly-163, and Ile-168–Gly-188.

The protein belongs to the MntP (TC 9.B.29) family.

It is found in the cell inner membrane. Its function is as follows. Probably functions as a manganese efflux pump. This Salmonella heidelberg (strain SL476) protein is Probable manganese efflux pump MntP.